We begin with the raw amino-acid sequence, 128 residues long: SH2 domain-containing protein 1A (128 aa).

The SH2 domain maps to 6–102; it reads VYHGKISRET…GIVIPLQYPV (97 aa). Positions 67–92 are interaction with FYN SH3 domain; it reads ETAPGVHKRFFRKIKNLISAFQKPDQ. The residue at position 89 (Lys89) is an N6-acetyllysine. Positions 104–128 are disordered; the sequence is KKPSARSTQGATGRRDDPDVFLKTP. Residues 116–128 are compositionally biased toward basic and acidic residues; it reads GRRDDPDVFLKTP.

Interacts with CD84, CD244, LY9, SLAMF1 and FYN. Interacts with NTRK1, NTRK2 and NTRK3.

It is found in the cytoplasm. Its function is as follows. Cytoplasmic adapter regulating receptors of the signaling lymphocytic activation molecule (SLAM) family such as SLAMF1, CD244, LY9, CD84, SLAMF6 and SLAMF7. In SLAM signaling seems to cooperate with SH2D1B/EAT-2. Initially it has been proposed that association with SLAMF1 prevents SLAMF1 binding to inhibitory effectors including INPP5D/SHIP1 and PTPN11/SHP-2. However, by simultaneous interactions, recruits FYN which subsequently phosphorylates and activates SLAMF1. Positively regulates CD244/2B4- and CD84-mediated natural killer (NK) cell functions. Can also promote CD48-, SLAMF6 -, LY9-, and SLAMF7-mediated NK cell activation. In the context of NK cell-mediated cytotoxicity enhances conjugate formation with target cells. May also regulate the activity of the neurotrophin receptors NTRK1, NTRK2 and NTRK3. In Bos taurus (Bovine), this protein is SH2 domain-containing protein 1A (SH2D1A).